The primary structure comprises 547 residues: Cytochrome P450 monooxygenase cpsD (547 aa).

A helical transmembrane segment spans residues 18 to 38 (LTGAALVVTLITSVIIVAADL). Cys476 contacts heme. Residues 528–547 (RRRDARRTHEALGSKLKPEE) form a disordered region. Residues 534–547 (RTHEALGSKLKPEE) are compositionally biased toward basic and acidic residues.

It belongs to the cytochrome P450 family. Requires heme as cofactor.

The protein resides in the membrane. It catalyses the reaction campesine B + campesine C + reduced [NADPH--hemoprotein reductase] + O2 = campesine D + oxidized [NADPH--hemoprotein reductase] + 2 H2O + 2 H(+). It carries out the reaction 2 campesine B + reduced [NADPH--hemoprotein reductase] + O2 = campesine F + oxidized [NADPH--hemoprotein reductase] + 2 H2O + H(+). The catalysed reaction is campesine C + campesine A + reduced [NADPH--hemoprotein reductase] + O2 = campesine E + oxidized [NADPH--hemoprotein reductase] + 2 H2O + 2 H(+). Its pathway is alkaloid biosynthesis. Cytochrome P450 monooxygenase; part of the gene cluster that mediates the biosynthesis of campesine G, a dimeric indole piperazine alkaloid that shows good insecticidal activity Galleria mellonella. Within the pathway, cpsD acts as a dimerase that simultaneously catalyzes one C-C bond (C3-C3') and two C-N bonds (C2-N16' and C2'-N16) coupling reactions between campesines B and C to produce a heterodimer with unexpected 6/5/6/6/6/6/5/6 eight-ring scaffold called campesine D. CpsD is also able to catalyze oxidative heterocoupling od campesines A with B to produce campesine F and campesines A with C to produce campesine E. The non-canonical non-ribosomal peptide synthetase cpsA catalyzes the first steps of the pathway by producing L-tryptophanal and L-valinal from their respective amino-acids. These products condensate spontaneously to form trypyl-valyl pyrazine also known as didehydrocampesine A. The NmrA-like family domain-containing oxidoreductase cpsB is the next enzyme in cps pathway and reduces the unstable didehydrocampesine A to campesine A. The methyltransferase cpsF and the acetyltransferase cpsE both recognize N13 of piperazine ring to carry out methylation and acetylation of campesine A to produce campesine C and B, respectively. The cytochrome P450 monooxygenase cpsD then acts as a dimerase that catalyzes oxidative heterocoupling between campesine B and C to produce heterodimers with unexpected 6/5/6/6/6/6/5/6 eight-ring scaffold called campesine D. Finally,the cytochrome P450 monooxygenase cpsC is a regioselective dehydrogenase that catalyzes dehydrogenation reaction towards C2-N1 to produce campesine G. This is Cytochrome P450 monooxygenase cpsD from Aspergillus campestris (strain IBT 28561).